Consider the following 357-residue polypeptide: Protein RecA (357 aa).

74 to 81 (GPESSGKT) contributes to the ATP binding site.

This sequence belongs to the RecA family.

Its subcellular location is the cytoplasm. Can catalyze the hydrolysis of ATP in the presence of single-stranded DNA, the ATP-dependent uptake of single-stranded DNA by duplex DNA, and the ATP-dependent hybridization of homologous single-stranded DNAs. It interacts with LexA causing its activation and leading to its autocatalytic cleavage. The polypeptide is Protein RecA (Bordetella petrii (strain ATCC BAA-461 / DSM 12804 / CCUG 43448)).